The chain runs to 319 residues: tRNA dimethylallyltransferase (319 aa).

10–17 (GPTAVGKT) lines the ATP pocket. 12–17 (TAVGKT) contacts substrate. Positions 35 to 38 (DSMQ) are interaction with substrate tRNA.

The protein belongs to the IPP transferase family. Monomer. Requires Mg(2+) as cofactor.

The catalysed reaction is adenosine(37) in tRNA + dimethylallyl diphosphate = N(6)-dimethylallyladenosine(37) in tRNA + diphosphate. Its function is as follows. Catalyzes the transfer of a dimethylallyl group onto the adenine at position 37 in tRNAs that read codons beginning with uridine, leading to the formation of N6-(dimethylallyl)adenosine (i(6)A). This is tRNA dimethylallyltransferase from Symbiobacterium thermophilum (strain DSM 24528 / JCM 14929 / IAM 14863 / T).